The primary structure comprises 689 residues: DNA topoisomerase 1 (689 aa).

The Toprim domain occupies 3–113; that stretch reads DNLVIVESPA…KENRVVFNEI (111 aa). Glu9 and Asp82 together coordinate Mg(2+). The 429-residue stretch at 129–557 folds into the Topo IA-type catalytic domain; that stretch reads EMNLVDAQQA…FFSSFKQDVE (429 aa). The interaction with DNA stretch occupies residues 163 to 168; sequence SAGRVQ. Tyr298 acts as the O-(5'-phospho-DNA)-tyrosine intermediate in catalysis. Residues 328-356 form a disordered region; sequence SKRKASGKQGDQDAHEAIRPSSTMRTPDD. C4-type zinc fingers lie at residues 577 to 603, 617 to 645, and 658 to 681; these read CEIC…FPDC, CPKC…YPEC, and CPKC…CSNC.

It belongs to the type IA topoisomerase family. In terms of assembly, monomer. Requires Mg(2+) as cofactor.

It catalyses the reaction ATP-independent breakage of single-stranded DNA, followed by passage and rejoining.. Releases the supercoiling and torsional tension of DNA, which is introduced during the DNA replication and transcription, by transiently cleaving and rejoining one strand of the DNA duplex. Introduces a single-strand break via transesterification at a target site in duplex DNA. The scissile phosphodiester is attacked by the catalytic tyrosine of the enzyme, resulting in the formation of a DNA-(5'-phosphotyrosyl)-enzyme intermediate and the expulsion of a 3'-OH DNA strand. The free DNA strand then undergoes passage around the unbroken strand, thus removing DNA supercoils. Finally, in the religation step, the DNA 3'-OH attacks the covalent intermediate to expel the active-site tyrosine and restore the DNA phosphodiester backbone. The polypeptide is DNA topoisomerase 1 (Staphylococcus aureus (strain USA300)).